Here is a 265-residue protein sequence, read N- to C-terminus: Upstream stimulatory factor (265 aa).

Over residues 1–18 (MDVQDHTLDQGPQDKDKD) the composition is skewed to basic and acidic residues. Disordered regions lie at residues 1–21 (MDVQ…DLEE) and 119–149 (ASAA…AAGG). The segment covering 134-144 (GEQQPGITQPS) has biased composition (polar residues). Residues 190 to 245 (RRRATHNEVERRRRDKINNWIVKLSKIIPDCNIDHSKQGQSKGGILTKTCDYIHDL) form the bHLH domain.

In terms of assembly, efficient DNA binding requires dimerization with another bHLH protein. Binds DNA as a homodimer or a heterodimer. In terms of tissue distribution, enriched in ectodermal tissue.

The protein localises to the nucleus. Functionally, may act as a transcription factor which recognizes the CACGTG motif on SPEC gene promoters. This Strongylocentrotus purpuratus (Purple sea urchin) protein is Upstream stimulatory factor.